The chain runs to 520 residues: Glucose-1-phosphate adenylyltransferase small subunit, chloroplastic (520 aa).

Residues 1–71 (MATMAAIGSL…RTPSIVSPKA (71 aa)) constitute a chloroplast transit peptide. The segment at 1–81 (MATMAAIGSL…VSDSQNSQTC (81 aa)) is disordered. Residues 14-27 (SSSSNHTRRLSSSS) are compositionally biased toward low complexity. The span at 28–51 (QRKTLSFSSSSLTGEKLNPTQEII) shows a compositional bias: polar residues.

This sequence belongs to the bacterial/plant glucose-1-phosphate adenylyltransferase family. Heterotetramer. Leaves.

It localises to the plastid. It is found in the chloroplast. It carries out the reaction alpha-D-glucose 1-phosphate + ATP + H(+) = ADP-alpha-D-glucose + diphosphate. Its pathway is glycan biosynthesis; starch biosynthesis. Activated by 3'phosphoglycerate, inhibited by orthophosphate. Allosteric regulation. This protein plays a role in synthesis of starch. It catalyzes the synthesis of the activated glycosyl donor, ADP-glucose from Glc-1-P and ATP. The protein is Glucose-1-phosphate adenylyltransferase small subunit, chloroplastic (AGPS1) of Brassica napus (Rape).